The chain runs to 368 residues: MSESPKKVIVGMSGGVDSSVSAWLLQQQGYQVEGLFMKNWEEDDGEEYCTAAADLADAQAVCDKLGIELHTVNFAAEYWDNVFELFLEEYKAGRTPNPDILCNKEIKFKAFLEFAAEDLGADYIATGHYVRRVDINGKSRLLRGLDGNKDQSYFLYTLGHEQIAQSLFPVGELEKPQVRKIAEDLGLITAKKKDSTGICFIGERKFRDFLGRYLPAQPGKIITVDGDEIGEHQGLMYHTLGQRKGLGIGGTKDGSEDPWYVVDKDVENNVLIVAQGHEHPRLMSSGLIAQQLHWVDREPFTGTLSCTVKTRYRQTDIPCTINALDDDRIEVIFDEPVAAVTPGQSAVFYSGEVCLGGGIIEQRLPLTV.

ATP-binding positions include 11–18 (GMSGGVDS) and M37. The interaction with target base in tRNA stretch occupies residues 97–99 (NPD). C102 acts as the Nucleophile in catalysis. A disulfide bridge links C102 with C199. G127 serves as a coordination point for ATP. The segment at 149 to 151 (KDQ) is interaction with tRNA. C199 (cysteine persulfide intermediate) is an active-site residue. The tract at residues 311–312 (RY) is interaction with tRNA.

The protein belongs to the MnmA/TRMU family. Interacts with TusE.

Its subcellular location is the cytoplasm. It carries out the reaction S-sulfanyl-L-cysteinyl-[protein] + uridine(34) in tRNA + AH2 + ATP = 2-thiouridine(34) in tRNA + L-cysteinyl-[protein] + A + AMP + diphosphate + H(+). Catalyzes the 2-thiolation of uridine at the wobble position (U34) of tRNA(Lys), tRNA(Glu) and tRNA(Gln), leading to the formation of s(2)U34, the first step of tRNA-mnm(5)s(2)U34 synthesis. Sulfur is provided by IscS, via a sulfur-relay system. Binds ATP and its substrate tRNAs. In Salmonella arizonae (strain ATCC BAA-731 / CDC346-86 / RSK2980), this protein is tRNA-specific 2-thiouridylase MnmA.